We begin with the raw amino-acid sequence, 600 residues long: ATP-dependent lipid A-core flippase (600 aa).

4 helical membrane passes run 26–46 (VGIF…QPML), 82–102 (LLIV…NYFL), 167–187 (VFLF…MLAI), and 266–286 (PMLQ…VLFL). Residues 30 to 321 (LLSIIGFVIF…LSEVSSTIQK (292 aa)) form the ABC transmembrane type-1 domain. The 237-residue stretch at 353–589 (LEVKNLSFFY…NGYYARLHAM (237 aa)) folds into the ABC transporter domain. 387–394 (GRSGSGKS) contributes to the ATP binding site.

Belongs to the ABC transporter superfamily. Lipid exporter (TC 3.A.1.106) family. Homodimer.

The protein localises to the cell inner membrane. The catalysed reaction is ATP + H2O + lipid A-core oligosaccharideSide 1 = ADP + phosphate + lipid A-core oligosaccharideSide 2.. In terms of biological role, involved in lipopolysaccharide (LPS) biosynthesis. Translocates lipid A-core from the inner to the outer leaflet of the inner membrane. Transmembrane domains (TMD) form a pore in the inner membrane and the ATP-binding domain (NBD) is responsible for energy generation. The polypeptide is ATP-dependent lipid A-core flippase (Pseudomonas syringae pv. syringae (strain B728a)).